The following is a 157-amino-acid chain: 2-C-methyl-D-erythritol 2,4-cyclodiphosphate synthase (157 aa).

2 residues coordinate a divalent metal cation: aspartate 9 and histidine 11. 4-CDP-2-C-methyl-D-erythritol 2-phosphate is bound by residues 9–11 and 35–36; these read DVH and HS. Histidine 43 is a binding site for a divalent metal cation. 4-CDP-2-C-methyl-D-erythritol 2-phosphate contacts are provided by residues 57 to 59, 62 to 66, 101 to 107, 133 to 136, phenylalanine 140, and arginine 143; these read DIG, FPDTD, AQKPKMA, and TTTE.

Belongs to the IspF family. As to quaternary structure, homotrimer. A divalent metal cation serves as cofactor.

It catalyses the reaction 4-CDP-2-C-methyl-D-erythritol 2-phosphate = 2-C-methyl-D-erythritol 2,4-cyclic diphosphate + CMP. It functions in the pathway isoprenoid biosynthesis; isopentenyl diphosphate biosynthesis via DXP pathway; isopentenyl diphosphate from 1-deoxy-D-xylulose 5-phosphate: step 4/6. Functionally, involved in the biosynthesis of isopentenyl diphosphate (IPP) and dimethylallyl diphosphate (DMAPP), two major building blocks of isoprenoid compounds. Catalyzes the conversion of 4-diphosphocytidyl-2-C-methyl-D-erythritol 2-phosphate (CDP-ME2P) to 2-C-methyl-D-erythritol 2,4-cyclodiphosphate (ME-CPP) with a corresponding release of cytidine 5-monophosphate (CMP). This chain is 2-C-methyl-D-erythritol 2,4-cyclodiphosphate synthase, found in Halalkalibacterium halodurans (strain ATCC BAA-125 / DSM 18197 / FERM 7344 / JCM 9153 / C-125) (Bacillus halodurans).